The following is a 930-amino-acid chain: Inter-alpha-trypsin inhibitor heavy chain H4 (930 aa).

The signal sequence occupies residues 1-28 (MKPPRPVRTCSKVLVLLSLLAIHQTTTA). The VIT domain occupies 29–148 (EKNGIDIYSL…KITFELVYEE (120 aa)). 2 N-linked (GlcNAc...) asparagine glycosylation sites follow: Asn-81 and Asn-207. The 161-residue stretch at 272–432 (PKNVVFVIDK…YAFLEKLALD (161 aa)) folds into the VWFA domain. Residue Asn-274 is glycosylated (N-linked (GlcNAc...) asparagine; atypical). Asn-517 and Asn-577 each carry an N-linked (GlcNAc...) asparagine glycan. Positions 595-618 (KPDDQEQSQVAEKPMEGESRNRNV) are disordered. The interval 658 to 688 (MNFRPGVLSSRQLGLPGPPDVPDHAAYHPFR) is proline-rich (PRR) potential bioactive peptide. A propeptide spans 662–688 (PGVLSSRQLGLPGPPDVPDHAAYHPFR) (potentially active peptide). 3 O-linked (GalNAc...) threonine glycosylation sites follow: Thr-719, Thr-720, and Thr-722. The segment at 719-725 (TTMTTQT) is O-glycosylated at three sites. Cys-747 and Cys-925 form a disulfide bridge.

This sequence belongs to the ITIH family. Interacts (via C-terminus) with DNAJC1 (via SANT 2 domain); this interaction protects ITIH4 against cleavage by kallikrein in vitro. Post-translationally, cleaved by plasma kallikrein to yield 100 kDa and 35 kDa fragments, and the resulting 100 kDa fragment is further converted to a 70 kDa fragment. In terms of processing, N- and O-glycosylated. In urine, O-linked glycosylation on threonine residues in the region from Thr-719 to Thr-725 consists of core 1 or possibly core 8 glycans. Mainly Hex(HexNAc)(2), but also some Hex(3)(HexNAc)(3). N-glycosylated but not O-glycosylated in plasma. Liver specific.

The protein localises to the secreted. Its function is as follows. Type II acute-phase protein (APP) involved in inflammatory responses to trauma. May also play a role in liver development or regeneration. This chain is Inter-alpha-trypsin inhibitor heavy chain H4 (ITIH4), found in Homo sapiens (Human).